Consider the following 207-residue polypeptide: Guanylate kinase (207 aa).

A Guanylate kinase-like domain is found at 5–184 (GNLFIVSAPS…ALADLSAIIR (180 aa)). 12–19 (APSGAGKS) is an ATP binding site. The segment at 30–49 (PSDKQVSVSHTTRKPRPGEV) is disordered.

The protein belongs to the guanylate kinase family.

It localises to the cytoplasm. The catalysed reaction is GMP + ATP = GDP + ADP. Essential for recycling GMP and indirectly, cGMP. This is Guanylate kinase from Shewanella frigidimarina (strain NCIMB 400).